Reading from the N-terminus, the 623-residue chain is Calnexin (623 aa).

The signal sequence occupies residues 1-21 (MLNRKWSFVFLTFLLVISVNA). D108 contacts Ca(2+). C151 and C185 are disulfide-bonded. An alpha-D-glucoside is bound by residues Y155, K157, Y176, and D183. N202 is a glycosylation site (N-linked (GlcNAc...) asparagine). Residues 260-337 (SLTPPKEIFD…QKPQDWDEDM (78 aa)) form a disordered region. Residues 266 to 276 (EIFDETDLKPE) show a composition bias toward basic and acidic residues. The interval 267 to 400 (IFDETDLKPE…RLIDNPNYFE (134 aa)) is p domain (Extended arm). A run of 5 repeats spans residues 269 to 281 (DETDLKPEDWDER), 286 to 298 (DETASKPDDWDEN), 305 to 317 (DESATKPYDWNEE), 324 to 336 (DPEAQKPQDWDED), and 339 to 349 (GSWEAPLIDNP). 2 4 X approximate repeats regions span residues 269 to 336 (DETD…WDED) and 339 to 396 (GSWE…IDNP). Acidic residues-rich tracts occupy residues 277 to 287 (DWDEREQIEDE) and 314 to 323 (WNEEENELIP). C351 and C357 are joined by a disulfide. A run of 3 repeats spans residues 358–368 (GTWKPPTIKNP), 372–382 (GKWVRPKIANP), and 386–396 (GKWSPRLIDNP). E416 is an an alpha-D-glucoside binding site. D427 is a Ca(2+) binding site. A helical transmembrane segment spans residues 480–500 (LWAVYILCILLPLIAIGVFCF). The tract at residues 536-623 (IAEDEEDNQP…AKRRTARRGD (88 aa)) is disordered. Over residues 556–565 (IDEDEQDEVE) the composition is skewed to acidic residues. A compositionally biased stretch (low complexity) spans 566-581 (QQPSSSKTASSESSSA). A compositionally biased stretch (basic residues) spans 614–623 (AKRRTARRGD).

Belongs to the calreticulin family. In terms of processing, glycosylation is important for its biological activity.

It is found in the endoplasmic reticulum membrane. The protein resides in the cytoplasm. It localises to the perinuclear region. Its subcellular location is the cytoplasmic vesicle. Its function is as follows. Calcium-binding protein that interacts with newly synthesized monoglucosylated glycoproteins in the endoplasmic reticulum. It may act in assisting protein assembly and/or in the retention within the ER of unassembled protein subunits. It seems to play a major role in the quality control apparatus of the ER by the retention of incorrectly folded proteins. Required for embryogenesis and larval development under heat and ER stress conditions. May be important for germ cell development. Involved in neuronal necrotic cell death. This Caenorhabditis briggsae protein is Calnexin.